A 373-amino-acid chain; its full sequence is tRNA (guanine(26)-N(2))-dimethyltransferase (373 aa).

The Trm1 methyltransferase domain occupies 2-365; it reads KIISEGETKL…AELSDLVVLI (364 aa). R35, R66, D86, D113, and A114 together coordinate S-adenosyl-L-methionine.

This sequence belongs to the class I-like SAM-binding methyltransferase superfamily. Trm1 family.

It carries out the reaction guanosine(26) in tRNA + 2 S-adenosyl-L-methionine = N(2)-dimethylguanosine(26) in tRNA + 2 S-adenosyl-L-homocysteine + 2 H(+). Dimethylates a single guanine residue at position 26 of a number of tRNAs using S-adenosyl-L-methionine as donor of the methyl groups. This Methanococcus maripaludis (strain C5 / ATCC BAA-1333) protein is tRNA (guanine(26)-N(2))-dimethyltransferase.